Reading from the N-terminus, the 205-residue chain is Glycerol-3-phosphate acyltransferase 1 (205 aa).

Transmembrane regions (helical) follow at residues 7–27 (TLIGYVFGNFLTAMIVGKLFL), 52–74 (WGILTCLGDLLKSLIALFIVYFV), 78–100 (HINIAYAGLGLILGHCFPIWNHF), 125–145 (LLIALILTAIMQNLTIPPLVF), and 160–180 (AGIVFMVITLIMVYKFWQDII).

Belongs to the PlsY family. In terms of assembly, probably interacts with PlsX.

It localises to the cell membrane. The catalysed reaction is an acyl phosphate + sn-glycerol 3-phosphate = a 1-acyl-sn-glycero-3-phosphate + phosphate. Its pathway is lipid metabolism; phospholipid metabolism. Its function is as follows. Catalyzes the transfer of an acyl group from acyl-phosphate (acyl-PO(4)) to glycerol-3-phosphate (G3P) to form lysophosphatidic acid (LPA). This enzyme utilizes acyl-phosphate as fatty acyl donor, but not acyl-CoA or acyl-ACP. The protein is Glycerol-3-phosphate acyltransferase 1 of Lactobacillus acidophilus (strain ATCC 700396 / NCK56 / N2 / NCFM).